Reading from the N-terminus, the 1431-residue chain is Gag-Pol polyprotein (1431 aa).

Glycine 2 is lipidated: N-myristoyl glycine; by host. Residues 7–31 are interaction with Gp41; the sequence is ILRGGKLDAWERIKLKPGGKKHYMM. Residues 8 to 43 form an interaction with host CALM1 region; the sequence is LRGGKLDAWERIKLKPGGKKHYMMKHLVWASRELER. The interaction with host AP3D1 stretch occupies residues 12-19; it reads KLDAWERI. The tract at residues 14–33 is interaction with membrane phosphatidylinositol 4,5-bisphosphate and RNA; it reads DAWERIKLKPGGKKHYMMKH. Positions 16-22 match the Nuclear export signal motif; sequence WERIKLK. The Nuclear localization signal motif lies at 26-32; the sequence is KKHYMMK. Residues 73 to 77 are interaction with membrane phosphatidylinositol 4,5-bisphosphate; sequence KELIS. Positions 106–126 are disordered; sequence EEQNKSQQKTQQAEAADKGKV. Tyrosine 130 carries the post-translational modification Phosphotyrosine; by host. Residues 187–225 are interaction with human PPIA/CYPA and NUP153; the sequence is NTVGGHQAAMQMLKDTINEEAAEWDRLHPVHAGPVAPGQ. Residues 275–361 are dimerization/Multimerization of capsid protein p24; sequence YSPVSILDIK…GGPGHKARVL (87 aa). 2 consecutive CCHC-type zinc fingers follow at residues 387 to 404 and 408 to 425; these read IKCFNCGKEGHLARNCRA and KGCWKCGKEGHQVKDCTE. The tract at residues 437–461 is disordered; it reads FPQGEARKSSSEQNRANSPTRRELQ. The dimerization of protease stretch occupies residues 485 to 489; sequence PQITL. The Peptidase A2 domain occupies 504–573; that stretch reads KEALLDTGAD…TPVNIIGRNM (70 aa). Aspartate 509 acts as the For protease activity; shared with dimeric partner in catalysis. Dimerization of protease regions lie at residues 533–539 and 572–584; these read GIGGFIK and NMLTQLGCTLNFP. In terms of domain architecture, Reverse transcriptase spans 627 to 817; sequence EGKITKIGPE…PPFLWMGYEL (191 aa). The Mg(2+) site is built by aspartate 693, aspartate 768, and aspartate 769. Positions 810–818 are RT 'primer grip'; sequence FLWMGYELH. The Tryptophan repeat motif motif lies at 981–997; sequence WEAWWTDYWQATWIPEW. The region spanning 1017 to 1140 is the RNase H type-1 domain; it reads IAGAETFYVD…VDKLVSSGIR (124 aa). Positions 1026, 1061, 1081, and 1132 each coordinate Mg(2+). The segment at 1146-1187 adopts an Integrase-type zinc-finger fold; the sequence is DGINKAQEEHEKYHSNWRAMASEFNLPPIVAKEIVASCDKCQ. 4 residues coordinate Zn(2+): histidine 1155, histidine 1159, cysteine 1183, and cysteine 1186. Residues 1197–1347 form the Integrase catalytic domain; it reads VDCSPGIWQL…SAGERIIDII (151 aa). Positions 1207, 1259, and 1295 each coordinate Mg(2+). The segment at residues 1366–1413 is a DNA-binding region (integrase-type); it reads FRVYYRDSRDPIWKGPAKLLWKGEGAVVLQDNSDIKVVPRRKVKIIKD.

Homotrimer; further assembles as hexamers of trimers. Interacts with gp41 (via C-terminus). Interacts with host CALM1; this interaction induces a conformational change in the Matrix protein, triggering exposure of the myristate group. Interacts with host AP3D1; this interaction allows the polyprotein trafficking to multivesicular bodies during virus assembly. Part of the pre-integration complex (PIC) which is composed of viral genome, matrix protein, Vpr and integrase. In terms of assembly, homodimer; the homodimer further multimerizes as homohexamers or homopentamers. Interacts with human PPIA/CYPA; This interaction stabilizes the capsid. Interacts with human NUP153. Interacts with host PDZD8; this interaction stabilizes the capsid. Interacts with monkey TRIM5; this interaction destabilizes the capsid. As to quaternary structure, homodimer, whose active site consists of two apposed aspartic acid residues. Heterodimer of p66 RT and p51 RT (RT p66/p51). Heterodimerization of RT is essential for DNA polymerase activity. The overall folding of the subdomains is similar in p66 RT and p51 RT but the spatial arrangements of the subdomains are dramatically different. In terms of assembly, homotetramer; may further associate as a homohexadecamer. Part of the pre-integration complex (PIC) which is composed of viral genome, matrix protein, Vpr and integrase. Interacts with human SMARCB1/INI1 and human PSIP1/LEDGF isoform 1. Interacts with human KPNA3; this interaction might play a role in nuclear import of the pre-integration complex. Interacts with human NUP153; this interaction might play a role in nuclear import of the pre-integration complex. Mg(2+) is required as a cofactor. Post-translationally, specific enzymatic cleavages by the viral protease yield mature proteins. The protease is released by autocatalytic cleavage. The polyprotein is cleaved during and after budding, this process is termed maturation. Proteolytic cleavage of p66 RT removes the RNase H domain to yield the p51 RT subunit. Nucleocapsid protein p7 might be further cleaved after virus entry. In terms of processing, tyrosine phosphorylated presumably in the virion by a host kinase. Phosphorylation is apparently not a major regulator of membrane association. Phosphorylated possibly by host MAPK1; this phosphorylation is necessary for Pin1-mediated virion uncoating. Post-translationally, methylated by host PRMT6, impairing its function by reducing RNA annealing and the initiation of reverse transcription.

The protein resides in the host cell membrane. Its subcellular location is the host endosome. It is found in the host multivesicular body. It localises to the virion membrane. The protein localises to the host nucleus. The protein resides in the host cytoplasm. Its subcellular location is the virion. It catalyses the reaction Specific for a P1 residue that is hydrophobic, and P1' variable, but often Pro.. The enzyme catalyses Endohydrolysis of RNA in RNA/DNA hybrids. Three different cleavage modes: 1. sequence-specific internal cleavage of RNA. Human immunodeficiency virus type 1 and Moloney murine leukemia virus enzymes prefer to cleave the RNA strand one nucleotide away from the RNA-DNA junction. 2. RNA 5'-end directed cleavage 13-19 nucleotides from the RNA end. 3. DNA 3'-end directed cleavage 15-20 nucleotides away from the primer terminus.. It carries out the reaction 3'-end directed exonucleolytic cleavage of viral RNA-DNA hybrid.. The catalysed reaction is DNA(n) + a 2'-deoxyribonucleoside 5'-triphosphate = DNA(n+1) + diphosphate. Its activity is regulated as follows. Protease: The viral protease is inhibited by many synthetic protease inhibitors (PIs), such as amprenavir, atazanavir, indinavir, loprinavir, nelfinavir, ritonavir and saquinavir. Use of protease inhibitors in tritherapy regimens permit more ambitious therapeutic strategies. Reverse transcriptase/ribonuclease H: RT can be inhibited either by nucleoside RT inhibitors (NRTIs) or by non nucleoside RT inhibitors (NNRTIs). NRTIs act as chain terminators, whereas NNRTIs inhibit DNA polymerization by binding a small hydrophobic pocket near the RT active site and inducing an allosteric change in this region. Classical NRTIs are abacavir, adefovir (PMEA), didanosine (ddI), lamivudine (3TC), stavudine (d4T), tenofovir (PMPA), zalcitabine (ddC), and zidovudine (AZT). Classical NNRTIs are atevirdine (BHAP U-87201E), delavirdine, efavirenz (DMP-266), emivirine (I-EBU), and nevirapine (BI-RG-587). The tritherapies used as a basic effective treatment of AIDS associate two NRTIs and one NNRTI. Mediates, with Gag polyprotein, the essential events in virion assembly, including binding the plasma membrane, making the protein-protein interactions necessary to create spherical particles, recruiting the viral Env proteins, and packaging the genomic RNA via direct interactions with the RNA packaging sequence (Psi). Gag-Pol polyprotein may regulate its own translation, by the binding genomic RNA in the 5'-UTR. At low concentration, the polyprotein would promote translation, whereas at high concentration, the polyprotein would encapsidate genomic RNA and then shut off translation. In terms of biological role, targets the polyprotein to the plasma membrane via a multipartite membrane-binding signal, that includes its myristoylated N-terminus. Matrix protein is part of the pre-integration complex. Implicated in the release from host cell mediated by Vpu. Binds to RNA. Its function is as follows. Forms the conical core that encapsulates the genomic RNA-nucleocapsid complex in the virion. Most core are conical, with only 7% tubular. The core is constituted by capsid protein hexamer subunits. The core is disassembled soon after virion entry. Host restriction factors such as TRIM5-alpha or TRIMCyp bind retroviral capsids and cause premature capsid disassembly, leading to blocks in reverse transcription. Capsid restriction by TRIM5 is one of the factors which restricts HIV-1 to the human species. Host PIN1 apparently facilitates the virion uncoating. On the other hand, interactions with PDZD8 or CYPA stabilize the capsid. Functionally, encapsulates and protects viral dimeric unspliced genomic RNA (gRNA). Binds these RNAs through its zinc fingers. Acts as a nucleic acid chaperone which is involved in rearangement of nucleic acid secondary structure during gRNA retrotranscription. Also facilitates template switch leading to recombination. As part of the polyprotein, participates in gRNA dimerization, packaging, tRNA incorporation and virion assembly. Aspartyl protease that mediates proteolytic cleavages of Gag and Gag-Pol polyproteins during or shortly after the release of the virion from the plasma membrane. Cleavages take place as an ordered, step-wise cascade to yield mature proteins. This process is called maturation. Displays maximal activity during the budding process just prior to particle release from the cell. Also cleaves Nef and Vif, probably concomitantly with viral structural proteins on maturation of virus particles. Hydrolyzes host EIF4GI and PABP1 in order to shut off the capped cellular mRNA translation. The resulting inhibition of cellular protein synthesis serves to ensure maximal viral gene expression and to evade host immune response. Also mediates cleavage of host YTHDF3. Mediates cleavage of host CARD8, thereby activating the CARD8 inflammasome, leading to the clearance of latent HIV-1 in patient CD4(+) T-cells after viral reactivation; in contrast, HIV-1 can evade CARD8-sensing when its protease remains inactive in infected cells prior to viral budding. In terms of biological role, multifunctional enzyme that converts the viral RNA genome into dsDNA in the cytoplasm, shortly after virus entry into the cell. This enzyme displays a DNA polymerase activity that can copy either DNA or RNA templates, and a ribonuclease H (RNase H) activity that cleaves the RNA strand of RNA-DNA heteroduplexes in a partially processive 3' to 5' endonucleasic mode. Conversion of viral genomic RNA into dsDNA requires many steps. A tRNA(3)-Lys binds to the primer-binding site (PBS) situated at the 5'-end of the viral RNA. RT uses the 3' end of the tRNA primer to perform a short round of RNA-dependent minus-strand DNA synthesis. The reading proceeds through the U5 region and ends after the repeated (R) region which is present at both ends of viral RNA. The portion of the RNA-DNA heteroduplex is digested by the RNase H, resulting in a ssDNA product attached to the tRNA primer. This ssDNA/tRNA hybridizes with the identical R region situated at the 3' end of viral RNA. This template exchange, known as minus-strand DNA strong stop transfer, can be either intra- or intermolecular. RT uses the 3' end of this newly synthesized short ssDNA to perform the RNA-dependent minus-strand DNA synthesis of the whole template. RNase H digests the RNA template except for two polypurine tracts (PPTs) situated at the 5'-end and near the center of the genome. It is not clear if both polymerase and RNase H activities are simultaneous. RNase H probably can proceed both in a polymerase-dependent (RNA cut into small fragments by the same RT performing DNA synthesis) and a polymerase-independent mode (cleavage of remaining RNA fragments by free RTs). Secondly, RT performs DNA-directed plus-strand DNA synthesis using the PPTs that have not been removed by RNase H as primers. PPTs and tRNA primers are then removed by RNase H. The 3' and 5' ssDNA PBS regions hybridize to form a circular dsDNA intermediate. Strand displacement synthesis by RT to the PBS and PPT ends produces a blunt ended, linear dsDNA copy of the viral genome that includes long terminal repeats (LTRs) at both ends. Its function is as follows. Catalyzes viral DNA integration into the host chromosome, by performing a series of DNA cutting and joining reactions. This enzyme activity takes place after virion entry into a cell and reverse transcription of the RNA genome in dsDNA. The first step in the integration process is 3' processing. This step requires a complex comprising the viral genome, matrix protein, Vpr and integrase. This complex is called the pre-integration complex (PIC). The integrase protein removes 2 nucleotides from each 3' end of the viral DNA, leaving recessed CA OH's at the 3' ends. In the second step, the PIC enters cell nucleus. This process is mediated through integrase and Vpr proteins, and allows the virus to infect a non dividing cell. This ability to enter the nucleus is specific of lentiviruses, other retroviruses cannot and rely on cell division to access cell chromosomes. In the third step, termed strand transfer, the integrase protein joins the previously processed 3' ends to the 5' ends of strands of target cellular DNA at the site of integration. The 5'-ends are produced by integrase-catalyzed staggered cuts, 5 bp apart. A Y-shaped, gapped, recombination intermediate results, with the 5'-ends of the viral DNA strands and the 3' ends of target DNA strands remaining unjoined, flanking a gap of 5 bp. The last step is viral DNA integration into host chromosome. This involves host DNA repair synthesis in which the 5 bp gaps between the unjoined strands are filled in and then ligated. Since this process occurs at both cuts flanking the HIV genome, a 5 bp duplication of host DNA is produced at the ends of HIV-1 integration. Alternatively, Integrase may catalyze the excision of viral DNA just after strand transfer, this is termed disintegration. In Homo sapiens (Human), this protein is Gag-Pol polyprotein (gag-pol).